Reading from the N-terminus, the 205-residue chain is Ribosomal RNA small subunit methyltransferase J (205 aa).

S-adenosyl-L-methionine-binding positions include 56–57, 72–73, and D124; these read RD and ER.

It belongs to the methyltransferase superfamily. RsmJ family.

The protein localises to the cytoplasm. The enzyme catalyses guanosine(1516) in 16S rRNA + S-adenosyl-L-methionine = N(2)-methylguanosine(1516) in 16S rRNA + S-adenosyl-L-homocysteine + H(+). In terms of biological role, specifically methylates the guanosine in position 1516 of 16S rRNA. The sequence is that of Ribosomal RNA small subunit methyltransferase J from Brucella anthropi (strain ATCC 49188 / DSM 6882 / CCUG 24695 / JCM 21032 / LMG 3331 / NBRC 15819 / NCTC 12168 / Alc 37) (Ochrobactrum anthropi).